The sequence spans 297 residues: tRNA dimethylallyltransferase (297 aa).

10–17 (GITASGKS) serves as a coordination point for ATP. 12–17 (TASGKS) contacts substrate. Positions 36–39 (DSKQ) are interaction with substrate tRNA.

It belongs to the IPP transferase family. As to quaternary structure, monomer. The cofactor is Mg(2+).

The catalysed reaction is adenosine(37) in tRNA + dimethylallyl diphosphate = N(6)-dimethylallyladenosine(37) in tRNA + diphosphate. In terms of biological role, catalyzes the transfer of a dimethylallyl group onto the adenine at position 37 in tRNAs that read codons beginning with uridine, leading to the formation of N6-(dimethylallyl)adenosine (i(6)A). The polypeptide is tRNA dimethylallyltransferase (Wolbachia pipientis subsp. Culex pipiens (strain wPip)).